The primary structure comprises 459 residues: NADH-ubiquinone oxidoreductase chain 4 (459 aa).

The next 12 helical transmembrane spans lie at 20 to 42 (PKWL…LTLF), 61 to 81 (MIST…IIAS), 103 to 123 (LQAL…YIMF), 148 to 168 (IYFL…LLYL), 194 to 214 (FLWV…GVHL), 224 to 244 (PVAG…YGMI), 257 to 277 (LAYP…SICM), 284 to 303 (SLIA…GILI), 307 to 329 (WGFT…LFCL), 350 to 370 (IILP…MALP), 392 to 414 (TILL…YMSS), and 435 to 455 (LLLT…ELIW).

The protein belongs to the complex I subunit 4 family.

The protein localises to the mitochondrion membrane. The enzyme catalyses a ubiquinone + NADH + 5 H(+)(in) = a ubiquinol + NAD(+) + 4 H(+)(out). Core subunit of the mitochondrial membrane respiratory chain NADH dehydrogenase (Complex I) that is believed to belong to the minimal assembly required for catalysis. Complex I functions in the transfer of electrons from NADH to the respiratory chain. The immediate electron acceptor for the enzyme is believed to be ubiquinone. This chain is NADH-ubiquinone oxidoreductase chain 4 (MT-ND4), found in Polypterus ornatipinnis (Ornate bichir).